The following is a 432-amino-acid chain: Serine--tRNA ligase (432 aa).

Position 237–239 (237–239 (TSE)) interacts with L-serine. An ATP-binding site is contributed by 268 to 270 (RSE). E291 lines the L-serine pocket. 355-358 (EISS) lines the ATP pocket. Residue S390 participates in L-serine binding.

Belongs to the class-II aminoacyl-tRNA synthetase family. Type-1 seryl-tRNA synthetase subfamily. Homodimer. The tRNA molecule binds across the dimer.

Its subcellular location is the cytoplasm. It catalyses the reaction tRNA(Ser) + L-serine + ATP = L-seryl-tRNA(Ser) + AMP + diphosphate + H(+). The catalysed reaction is tRNA(Sec) + L-serine + ATP = L-seryl-tRNA(Sec) + AMP + diphosphate + H(+). Its pathway is aminoacyl-tRNA biosynthesis; selenocysteinyl-tRNA(Sec) biosynthesis; L-seryl-tRNA(Sec) from L-serine and tRNA(Sec): step 1/1. Catalyzes the attachment of serine to tRNA(Ser). Is also able to aminoacylate tRNA(Sec) with serine, to form the misacylated tRNA L-seryl-tRNA(Sec), which will be further converted into selenocysteinyl-tRNA(Sec). The sequence is that of Serine--tRNA ligase from Methylobacillus flagellatus (strain ATCC 51484 / DSM 6875 / VKM B-1610 / KT).